The following is a 511-amino-acid chain: Cobyric acid synthase (511 aa).

Positions 251-443 (LLDIAIICLP…IHGIFDNDVF (193 aa)) constitute a GATase cobBQ-type domain. The active-site Nucleophile is C332. Residue H435 is part of the active site.

It belongs to the CobB/CobQ family. CobQ subfamily.

It participates in cofactor biosynthesis; adenosylcobalamin biosynthesis. Catalyzes amidations at positions B, D, E, and G on adenosylcobyrinic A,C-diamide. NH(2) groups are provided by glutamine, and one molecule of ATP is hydrogenolyzed for each amidation. This is Cobyric acid synthase from Listeria monocytogenes serotype 4b (strain F2365).